The primary structure comprises 202 residues: LexA repressor (202 aa).

The H-T-H motif DNA-binding region spans 28 to 48 (RAEIAQRLGFRSPNAAEEHLK). Catalysis depends on for autocatalytic cleavage activity residues Ser119 and Lys156.

It belongs to the peptidase S24 family. In terms of assembly, homodimer.

It catalyses the reaction Hydrolysis of Ala-|-Gly bond in repressor LexA.. In terms of biological role, represses a number of genes involved in the response to DNA damage (SOS response), including recA and lexA. Binds to the 16 bp palindromic sequence 5'-CTGTATATATATACAG-3'. In the presence of single-stranded DNA, RecA interacts with LexA causing an autocatalytic cleavage which disrupts the DNA-binding part of LexA, leading to derepression of the SOS regulon and eventually DNA repair. The chain is LexA repressor from Yersinia enterocolitica serotype O:8 / biotype 1B (strain NCTC 13174 / 8081).